Reading from the N-terminus, the 140-residue chain is Large ribosomal subunit protein uL16 (140 aa).

It belongs to the universal ribosomal protein uL16 family. As to quaternary structure, part of the 50S ribosomal subunit.

Its function is as follows. Binds 23S rRNA and is also seen to make contacts with the A and possibly P site tRNAs. This chain is Large ribosomal subunit protein uL16, found in Phytoplasma australiense.